The chain runs to 440 residues: tRNA(Ile)-lysidine synthase (440 aa).

Ser13–Ser18 is a binding site for ATP.

The protein belongs to the tRNA(Ile)-lysidine synthase family.

The protein localises to the cytoplasm. It carries out the reaction cytidine(34) in tRNA(Ile2) + L-lysine + ATP = lysidine(34) in tRNA(Ile2) + AMP + diphosphate + H(+). Ligates lysine onto the cytidine present at position 34 of the AUA codon-specific tRNA(Ile) that contains the anticodon CAU, in an ATP-dependent manner. Cytidine is converted to lysidine, thus changing the amino acid specificity of the tRNA from methionine to isoleucine. The sequence is that of tRNA(Ile)-lysidine synthase from Solibacter usitatus (strain Ellin6076).